The following is a 329-amino-acid chain: RNA-binding protein CP33, chloroplastic (329 aa).

Residues 1–69 (MSSAYCSSAV…NIRRHRFFCA (69 aa)) constitute a chloroplast transit peptide. A compositionally biased stretch (acidic residues) spans 77 to 104 (ADDEIQASVEEEEEVEEEGDEGEEEVEE). Disordered stretches follow at residues 77 to 117 (ADDE…EEGR) and 296 to 329 (SEREKPTVSPPSVEEGETEEASLESNEVLSNVSA). 2 RRM domains span residues 116 to 194 (GRLY…FPEV) and 219 to 297 (HKVY…LASE).

It localises to the plastid. The protein localises to the chloroplast. Could be involved in splicing and/or processing of chloroplast RNAs. The sequence is that of RNA-binding protein CP33, chloroplastic from Arabidopsis thaliana (Mouse-ear cress).